A 426-amino-acid chain; its full sequence is Glutamate-1-semialdehyde 2,1-aminomutase (426 aa).

The residue at position 265 (Lys-265) is an N6-(pyridoxal phosphate)lysine.

It belongs to the class-III pyridoxal-phosphate-dependent aminotransferase family. HemL subfamily. Homodimer. The cofactor is pyridoxal 5'-phosphate.

It localises to the cytoplasm. The catalysed reaction is (S)-4-amino-5-oxopentanoate = 5-aminolevulinate. It functions in the pathway porphyrin-containing compound metabolism; protoporphyrin-IX biosynthesis; 5-aminolevulinate from L-glutamyl-tRNA(Glu): step 2/2. The polypeptide is Glutamate-1-semialdehyde 2,1-aminomutase (Pseudoalteromonas translucida (strain TAC 125)).